The chain runs to 233 residues: Gamma-interferon-responsive lysosomal thiol protein (233 aa).

The signal sequence occupies residues 1–26; that stretch reads MVSSSLTKLVFFGCLLLLTFTDNLVA. C42 and C45 are joined by a disulfide. N-linked (GlcNAc...) asparagine glycosylation is found at N80 and N207. Positions 200–233 are cleaved as a propeptide — removed in mature form; it reads TTLPKVCNSSASMSKSPERKWKLQVSYANKATNY.

This sequence belongs to the GILT family. In terms of assembly, dimer; disulfide-linked. Expressed in the outer integument of seed coat.

It localises to the secreted. The protein localises to the lysosome. In terms of biological role, lysosomal thiol reductase that can reduce protein disulfide bonds. May facilitate the complete unfolding of proteins destined for lysosomal degradation. The protein is Gamma-interferon-responsive lysosomal thiol protein of Arabidopsis thaliana (Mouse-ear cress).